The following is a 341-amino-acid chain: Phenylalanine--tRNA ligase alpha subunit (341 aa).

Glutamate 254 contacts Mg(2+).

It belongs to the class-II aminoacyl-tRNA synthetase family. Phe-tRNA synthetase alpha subunit type 1 subfamily. As to quaternary structure, tetramer of two alpha and two beta subunits. Mg(2+) serves as cofactor.

Its subcellular location is the cytoplasm. It catalyses the reaction tRNA(Phe) + L-phenylalanine + ATP = L-phenylalanyl-tRNA(Phe) + AMP + diphosphate + H(+). This Chlorobaculum parvum (strain DSM 263 / NCIMB 8327) (Chlorobium vibrioforme subsp. thiosulfatophilum) protein is Phenylalanine--tRNA ligase alpha subunit.